The following is a 387-amino-acid chain: 1-deoxy-D-xylulose 5-phosphate reductoisomerase (387 aa).

Residues threonine 10, glycine 11, serine 12, isoleucine 13, glycine 36, asparagine 38, and asparagine 122 each contribute to the NADPH site. Lysine 123 contributes to the 1-deoxy-D-xylulose 5-phosphate binding site. Residue glutamate 124 participates in NADPH binding. Aspartate 148 is a binding site for Mn(2+). 1-deoxy-D-xylulose 5-phosphate-binding residues include serine 149, glutamate 150, serine 174, and histidine 197. Glutamate 150 is a binding site for Mn(2+). Residue glycine 203 participates in NADPH binding. Serine 210, asparagine 215, lysine 216, and glutamate 219 together coordinate 1-deoxy-D-xylulose 5-phosphate. Residue glutamate 219 participates in Mn(2+) binding.

Belongs to the DXR family. Requires Mg(2+) as cofactor. It depends on Mn(2+) as a cofactor.

The enzyme catalyses 2-C-methyl-D-erythritol 4-phosphate + NADP(+) = 1-deoxy-D-xylulose 5-phosphate + NADPH + H(+). It functions in the pathway isoprenoid biosynthesis; isopentenyl diphosphate biosynthesis via DXP pathway; isopentenyl diphosphate from 1-deoxy-D-xylulose 5-phosphate: step 1/6. Functionally, catalyzes the NADPH-dependent rearrangement and reduction of 1-deoxy-D-xylulose-5-phosphate (DXP) to 2-C-methyl-D-erythritol 4-phosphate (MEP). This chain is 1-deoxy-D-xylulose 5-phosphate reductoisomerase, found in Chloroherpeton thalassium (strain ATCC 35110 / GB-78).